The primary structure comprises 403 residues: Accessory Sec system protein translocase subunit SecY2 (403 aa).

Helical transmembrane passes span 17-37 (MLYTCFILFIYILGTNISIVS), 63-83 (LNIFTLGLVPWLTSMIILMLI), 105-125 (ILTLILSVIQSYFVIHEYVSK), 131-151 (DNIYLTILILVTGTMLLVWLA), 157-177 (YGIAGPMPIVMVSIIKSMMHQ), 186-206 (HIVIALLIILVIITLFILLFI), 240-260 (ITLMMSISAFVFLKSGIHFIL), 276-296 (FDSPVGISVYLVIQMLLGYFL), 339-359 (WFGSALVTVIIGIPLYFTLFV), and 366-386 (IYFSVQLIVLVYISINIAETI).

Belongs to the SecY/SEC61-alpha family. SecY2 subfamily. As to quaternary structure, component of the accessory SecA2/SecY2 protein translocase complex required to export cell wall proteins. May form heterotrimers with SecE and SecG subunits.

Its subcellular location is the cell membrane. Its function is as follows. Part of the accessory SecA2/SecY2 system specifically required for export of possible cell wall proteins. The central subunit of a protein translocation channel. This is Accessory Sec system protein translocase subunit SecY2 from Staphylococcus aureus (strain N315).